Consider the following 555-residue polypeptide: Protein NRT1/ PTR FAMILY 5.4 (555 aa).

2 consecutive transmembrane segments (helical) span residues 18-38 (AALF…GLAS) and 62-82 (WIGV…SILG). Thr-86 is subject to Phosphothreonine. Helical transmembrane passes span 87-107 (VLLT…SVTV), 116-136 (VFFM…PCVM), 159-179 (NYWY…LIFI), 187-207 (LGFS…LIGI), 311-331 (IPIW…NTFF), 348-368 (IPPA…IPLY), 392-412 (IGVG…VEAK), 435-455 (LWLL…IVGM), 470-490 (IGAA…TGII), and 516-536 (YYYW…LFIA).

This sequence belongs to the major facilitator superfamily. Proton-dependent oligopeptide transporter (POT/PTR) (TC 2.A.17) family. In terms of tissue distribution, expressed in roots and flowers.

It localises to the membrane. This chain is Protein NRT1/ PTR FAMILY 5.4 (NPF5.4), found in Arabidopsis thaliana (Mouse-ear cress).